The chain runs to 901 residues: Disease resistance RPP8-like protein 3 (901 aa).

The stretch at 15–56 (ALLNRESERLNGIDEQVDGLKRQLRGLQSLLKDADAKKHGSD) forms a coiled coil. The region spanning 144–453 (LQDIQREIRQ…AEGIYDGLTI (310 aa)) is the NB-ARC domain. ATP contacts are provided by residues 190–197 (GMGGIGKT) and 385–392 (GAQIVGKS). LRR repeat units follow at residues 567–591 (LPLL…SIGG), 592–615 (LIHL…IRNL), and 833–858 (MPCL…KYVT).

This sequence belongs to the disease resistance NB-LRR family. RPP8/HRT subfamily.

Its function is as follows. Disease resistance protein. The sequence is that of Disease resistance RPP8-like protein 3 (RPP8L3) from Arabidopsis thaliana (Mouse-ear cress).